The sequence spans 122 residues: MALKTFELRKQSQENLAEQLQELRQELASLRVQKIAGGSGSKLSKIKTTRKDIARILTVINESNRLAAREAYKNKKYIPLDLRQKKTRAIRRALTPYEQSRKTLKQIKKERYFPLRKYALKA.

A Phosphoserine modification is found at Ser-12.

The protein belongs to the universal ribosomal protein uL29 family. In terms of assembly, component of the large ribosomal subunit (LSU). Mature yeast ribosomes consist of a small (40S) and a large (60S) subunit. The 40S small subunit contains 1 molecule of ribosomal RNA (18S rRNA) and at least 33 different proteins. The large 60S subunit contains 3 rRNA molecules (25S, 5.8S and 5S rRNA) and at least 46 different proteins. uL29 is associated with the polypeptide exit tunnel.

It is found in the cytoplasm. The protein localises to the nucleus. It localises to the nucleolus. In terms of biological role, component of the ribosome, a large ribonucleoprotein complex responsible for the synthesis of proteins in the cell. The small ribosomal subunit (SSU) binds messenger RNAs (mRNAs) and translates the encoded message by selecting cognate aminoacyl-transfer RNA (tRNA) molecules. The large subunit (LSU) contains the ribosomal catalytic site termed the peptidyl transferase center (PTC), which catalyzes the formation of peptide bonds, thereby polymerizing the amino acids delivered by tRNAs into a polypeptide chain. The nascent polypeptides leave the ribosome through a tunnel in the LSU and interact with protein factors that function in enzymatic processing, targeting, and the membrane insertion of nascent chains at the exit of the ribosomal tunnel. The chain is Large ribosomal subunit protein uL29 (rpl35) from Schizosaccharomyces pombe (strain 972 / ATCC 24843) (Fission yeast).